Reading from the N-terminus, the 443-residue chain is Probable glycine dehydrogenase (decarboxylating) subunit 1 (443 aa).

The protein belongs to the GcvP family. N-terminal subunit subfamily. In terms of assembly, the glycine cleavage system is composed of four proteins: P, T, L and H. In this organism, the P 'protein' is a heterodimer of two subunits.

The enzyme catalyses N(6)-[(R)-lipoyl]-L-lysyl-[glycine-cleavage complex H protein] + glycine + H(+) = N(6)-[(R)-S(8)-aminomethyldihydrolipoyl]-L-lysyl-[glycine-cleavage complex H protein] + CO2. Its function is as follows. The glycine cleavage system catalyzes the degradation of glycine. The P protein binds the alpha-amino group of glycine through its pyridoxal phosphate cofactor; CO(2) is released and the remaining methylamine moiety is then transferred to the lipoamide cofactor of the H protein. The sequence is that of Probable glycine dehydrogenase (decarboxylating) subunit 1 from Nitratidesulfovibrio vulgaris (strain DP4) (Desulfovibrio vulgaris).